Here is a 229-residue protein sequence, read N- to C-terminus: Ribonuclease 3 (229 aa).

Residues 7 to 132 (LKAFEGRIGH…VIAAVYLDAG (126 aa)) enclose the RNase III domain. Glu-45 is a binding site for Mg(2+). Asp-49 is a catalytic residue. The Mg(2+) site is built by Asp-118 and Glu-121. The active site involves Glu-121. The DRBM domain maps to 157 to 226 (DAKTALQEWA…ARALLARMEA (70 aa)).

The protein belongs to the ribonuclease III family. As to quaternary structure, homodimer. The cofactor is Mg(2+).

It localises to the cytoplasm. It catalyses the reaction Endonucleolytic cleavage to 5'-phosphomonoester.. Digests double-stranded RNA. Involved in the processing of primary rRNA transcript to yield the immediate precursors to the large and small rRNAs (23S and 16S). Processes some mRNAs, and tRNAs when they are encoded in the rRNA operon. Processes pre-crRNA and tracrRNA of type II CRISPR loci if present in the organism. This Cereibacter sphaeroides (strain ATCC 17029 / ATH 2.4.9) (Rhodobacter sphaeroides) protein is Ribonuclease 3.